Reading from the N-terminus, the 155-residue chain is Small ribosomal subunit protein uS7c (155 aa).

The protein belongs to the universal ribosomal protein uS7 family. Part of the 30S ribosomal subunit.

The protein localises to the plastid. Its subcellular location is the chloroplast. Functionally, one of the primary rRNA binding proteins, it binds directly to 16S rRNA where it nucleates assembly of the head domain of the 30S subunit. In Lactoris fernandeziana, this protein is Small ribosomal subunit protein uS7c (rps7).